Consider the following 140-residue polypeptide: Large ribosomal subunit protein uL16 (140 aa).

Over residues 1–14 (MLMPKKVKHRKQMK) the composition is skewed to basic residues. Positions 1 to 20 (MLMPKKVKHRKQMKGRMSGT) are disordered.

The protein belongs to the universal ribosomal protein uL16 family. As to quaternary structure, part of the 50S ribosomal subunit.

Its function is as follows. Binds 23S rRNA and is also seen to make contacts with the A and possibly P site tRNAs. This is Large ribosomal subunit protein uL16 from Geotalea daltonii (strain DSM 22248 / JCM 15807 / FRC-32) (Geobacter daltonii).